We begin with the raw amino-acid sequence, 396 residues long: Elongation factor Tu (396 aa).

Residues 10–205 (KPHVNIGTIG…AVDSYIPTPE (196 aa)) form the tr-type G domain. The tract at residues 19–26 (GHVDHGKT) is G1. 19-26 (GHVDHGKT) serves as a coordination point for GTP. A Mg(2+)-binding site is contributed by Thr-26. The tract at residues 60–64 (GITIN) is G2. The segment at 81–84 (DCPG) is G3. Residues 81-85 (DCPGH) and 136-139 (NKCD) contribute to the GTP site. The G4 stretch occupies residues 136 to 139 (NKCD). Positions 174–176 (SAK) are G5.

The protein belongs to the TRAFAC class translation factor GTPase superfamily. Classic translation factor GTPase family. EF-Tu/EF-1A subfamily. In terms of assembly, monomer.

The protein localises to the cytoplasm. The enzyme catalyses GTP + H2O = GDP + phosphate + H(+). GTP hydrolase that promotes the GTP-dependent binding of aminoacyl-tRNA to the A-site of ribosomes during protein biosynthesis. This chain is Elongation factor Tu, found in Brevibacillus brevis (strain 47 / JCM 6285 / NBRC 100599).